We begin with the raw amino-acid sequence, 380 residues long: Succinyl-diaminopimelate desuccinylase (380 aa).

Zn(2+) is bound at residue His-68. Residue Asp-70 is part of the active site. Asp-101 is a Zn(2+) binding site. Glu-135 acts as the Proton acceptor in catalysis. Zn(2+)-binding residues include Glu-136, Glu-164, and His-350.

Belongs to the peptidase M20A family. DapE subfamily. As to quaternary structure, homodimer. It depends on Zn(2+) as a cofactor. Requires Co(2+) as cofactor.

It catalyses the reaction N-succinyl-(2S,6S)-2,6-diaminopimelate + H2O = (2S,6S)-2,6-diaminopimelate + succinate. Its pathway is amino-acid biosynthesis; L-lysine biosynthesis via DAP pathway; LL-2,6-diaminopimelate from (S)-tetrahydrodipicolinate (succinylase route): step 3/3. Functionally, catalyzes the hydrolysis of N-succinyl-L,L-diaminopimelic acid (SDAP), forming succinate and LL-2,6-diaminopimelate (DAP), an intermediate involved in the bacterial biosynthesis of lysine and meso-diaminopimelic acid, an essential component of bacterial cell walls. This is Succinyl-diaminopimelate desuccinylase from Tolumonas auensis (strain DSM 9187 / NBRC 110442 / TA 4).